A 477-amino-acid polypeptide reads, in one-letter code: Ribulose bisphosphate carboxylase large chain (477 aa).

Positions 1–2 (MS) are excised as a propeptide. P3 bears the N-acetylproline mark. An N6,N6,N6-trimethyllysine modification is found at K14. Substrate is bound by residues N123 and T173. K175 functions as the Proton acceptor in the catalytic mechanism. K177 serves as a coordination point for substrate. Mg(2+) contacts are provided by K201, D203, and E204. K201 bears the N6-carboxylysine mark. The active-site Proton acceptor is the H294. The substrate site is built by R295, H327, and S379.

Belongs to the RuBisCO large chain family. Type I subfamily. Heterohexadecamer of 8 large chains and 8 small chains; disulfide-linked. The disulfide link is formed within the large subunit homodimers. It depends on Mg(2+) as a cofactor. In terms of processing, the disulfide bond which can form in the large chain dimeric partners within the hexadecamer appears to be associated with oxidative stress and protein turnover.

The protein localises to the plastid. The protein resides in the chloroplast. The catalysed reaction is 2 (2R)-3-phosphoglycerate + 2 H(+) = D-ribulose 1,5-bisphosphate + CO2 + H2O. The enzyme catalyses D-ribulose 1,5-bisphosphate + O2 = 2-phosphoglycolate + (2R)-3-phosphoglycerate + 2 H(+). Functionally, ruBisCO catalyzes two reactions: the carboxylation of D-ribulose 1,5-bisphosphate, the primary event in carbon dioxide fixation, as well as the oxidative fragmentation of the pentose substrate in the photorespiration process. Both reactions occur simultaneously and in competition at the same active site. This chain is Ribulose bisphosphate carboxylase large chain, found in Nicotiana sylvestris (Wood tobacco).